The sequence spans 745 residues: Mitogen-activated protein kinase kinase kinase zak-1 (745 aa).

The Protein kinase domain maps to 31–305 (IQVGDHIGVG…KVMDECEKFM (275 aa)). ATP is bound by residues 37-45 (IGVGTFGAV) and Lys63. The active-site Proton acceptor is Asp159. The stretch at 307–352 (LEDWKTEIEKQEKNVEKMRKDLEKRREQLEIREKALKQRMKVEQAV) forms a coiled coil. The SAM domain maps to 366–438 (WSEHHTSHWV…MKMIRKLADT (73 aa)). Residues 693-745 (LTRRRRTTTTNSEDTEKSDTNNKTPESQARRVHVHGGKDKWNWKKGKSRPKFT) are disordered. A compositionally biased stretch (basic residues) spans 735-745 (WKKGKSRPKFT).

The protein belongs to the protein kinase superfamily. STE Ser/Thr protein kinase family. MAP kinase kinase kinase subfamily. Mg(2+) is required as a cofactor. As to expression, widely expressed; expressed in most tissues, including intestines, muscle and the nervous system.

It is found in the cytoplasm. It localises to the nucleus. The catalysed reaction is L-seryl-[protein] + ATP = O-phospho-L-seryl-[protein] + ADP + H(+). The enzyme catalyses L-threonyl-[protein] + ATP = O-phospho-L-threonyl-[protein] + ADP + H(+). Its function is as follows. Stress-activated component of a protein kinase signal transduction cascade that promotes programmed cell death in response to ribotoxic stress. Acts as the proximal sensor of ribotoxic stress: directly binds to the ribosome, thereby acting as a sentinel for colliding ribosomes. Upon ribosome collisions, activates the stress-activated protein kinase signal transduction cascade, leading to programmed cell death. Acts by catalyzing phosphorylation of MAP kinase kinases, leading to activation of the JNK and MAP kinase p38 pathways. The polypeptide is Mitogen-activated protein kinase kinase kinase zak-1 (Caenorhabditis elegans).